We begin with the raw amino-acid sequence, 1183 residues long: MGRLRKRFNEKGRQSGIQKMLNLKRARLHRSVREQESSSEVHANPEPDNQDSNAEILIDVPKEERQKRKQELKDQLLKENEGSISSKKKKRLDKYIENKLKKEEVASLIAKLAEERIDTSLLSSSKNLGKQATAKEKLKKSLLEEKLGLPLSDADSRLYKVVDVETTTTKSSTAETNAPEKYSTRSGFGFGFSTGTNESEITPNIKVLPPKKKKNASWGKMLNEDPEYDSAEEDYLSTDSEEFSEDSDNSSEENKDTNEPSTKDAEKTVPEDVVNLRSEQKLQPSFGHPEFENEDFDLETSEDDSSDDATERASRFKSWANKQILGADVGEKSHDVAPDNKIDNPDADMVRAQRMPRKLKMREEDVEPTADDIEIKGRKTTYTIINRPPEIQESRLALPIVAEEQRIMEQIFANDVVIICGATGSGKTTQLPQFLFEAGFSSPESENPGMIAITQPRRVAAVSIAKRVSEELTGFSSKVSYQIRFDSTINPDTAIKFMTDGILLRELSSDFLLTAYSAVIVDEAHERSVNTDILLGLLSRIVRLRREMSKSDQKVKPLKLIIMSATLRVTDFSENKLLFSVPPPIIKIDARQYPVSIHFNRTTKPDYLQDAFDKVCLIHKRLPAGSILVFLTGQQEVEQLCQMLRKRFVRSFRPLKSRARIVVSRKTMSVENEDLQSETEDIDQVPTSSSSSVTYDDESEPMYVLPLYSLLTTEDQMKVFDSSPEGHRMCIVATNVAETSITIPNIRYVVDCGKAKERVYNEKTSVQKFEVRWISKANADQRAGRAGRTGPGHCYRLYSSAVFDSSFPLHSLPEILRTPVESIVLQMKNMNIDNIANFPFPTSPGRSRLEKSLKLLSNLGAIDSEGVLTKLGEQMSLFPLSPRFSKMLIIGQQHGCLPYVIALVSALSINQLFVSKQSLLYDAHDKNSRSEETDLIDDDEIKQKEEYKNRMRGYFNAISRFQAIDPDAPALSLLSAVCAYDYASDKRKFCKENYLREKALEEVTNLRKQIIGLLKRYMVRVEKEFFKLQLKPPTSVQIKALRQFIASAYIDQVALYDKEKRGYVTLFPSGSEVVQFVPDRTYNIDSEYVVYLSLHESRSGRVYMSPLTEISPEHLARLAKNTTLLSYSKPLSYPPIRYLDNATKRECWVIPILSANIGTGSPSWNLPAVQIIQKRINGRWVNC.

Disordered stretches follow at residues 1 to 92 (MGRL…KKRL) and 165 to 315 (ETTT…RASR). Basic and acidic residues predominate over residues 60 to 81 (VPKEERQKRKQELKDQLLKENE). Composition is skewed to low complexity over residues 165–176 (ETTTTKSSTAET) and 184–196 (TRSG…STGT). Over residues 224-251 (EDPEYDSAEEDYLSTDSEEFSEDSDNSS) the composition is skewed to acidic residues. The span at 252 to 270 (EENKDTNEPSTKDAEKTVP) shows a compositional bias: basic and acidic residues. Acidic residues predominate over residues 292–308 (ENEDFDLETSEDDSSDD). The 178-residue stretch at 408 to 585 (MEQIFANDVV…KLLFSVPPPI (178 aa)) folds into the Helicase ATP-binding domain. Residue 421 to 428 (GATGSGKT) participates in ATP binding. The DEAH box signature appears at 522 to 525 (DEAH). One can recognise a Helicase C-terminal domain in the interval 611–831 (AFDKVCLIHK…SIVLQMKNMN (221 aa)). Over residues 673–683 (EDLQSETEDID) the composition is skewed to acidic residues. The interval 673 to 696 (EDLQSETEDIDQVPTSSSSSVTYD) is disordered.

It belongs to the DEAD box helicase family. DEAH subfamily.

It localises to the nucleus. It is found in the nucleolus. It catalyses the reaction ATP + H2O = ADP + phosphate + H(+). This chain is Putative ATP-dependent RNA helicase PB1A10.06c, found in Schizosaccharomyces pombe (strain 972 / ATCC 24843) (Fission yeast).